A 156-amino-acid chain; its full sequence is ATP synthase subunit b (156 aa).

The chain crosses the membrane as a helical span at residues 7–27; sequence IFFQMLVFFVLGWFTMKFVWP.

The protein belongs to the ATPase B chain family. As to quaternary structure, F-type ATPases have 2 components, F(1) - the catalytic core - and F(0) - the membrane proton channel. F(1) has five subunits: alpha(3), beta(3), gamma(1), delta(1), epsilon(1). F(0) has three main subunits: a(1), b(2) and c(10-14). The alpha and beta chains form an alternating ring which encloses part of the gamma chain. F(1) is attached to F(0) by a central stalk formed by the gamma and epsilon chains, while a peripheral stalk is formed by the delta and b chains.

Its subcellular location is the cell inner membrane. Its function is as follows. F(1)F(0) ATP synthase produces ATP from ADP in the presence of a proton or sodium gradient. F-type ATPases consist of two structural domains, F(1) containing the extramembraneous catalytic core and F(0) containing the membrane proton channel, linked together by a central stalk and a peripheral stalk. During catalysis, ATP synthesis in the catalytic domain of F(1) is coupled via a rotary mechanism of the central stalk subunits to proton translocation. Functionally, component of the F(0) channel, it forms part of the peripheral stalk, linking F(1) to F(0). This Bordetella petrii (strain ATCC BAA-461 / DSM 12804 / CCUG 43448) protein is ATP synthase subunit b.